The sequence spans 390 residues: Mannitol-1-phosphate 5-dehydrogenase (390 aa).

7 to 18 (AVHFGGGNIGRG) serves as a coordination point for NAD(+). Lys216 is an active-site residue.

The protein belongs to the mannitol dehydrogenase family. As to quaternary structure, monomer.

The enzyme catalyses D-mannitol 1-phosphate + NAD(+) = beta-D-fructose 6-phosphate + NADH + H(+). Its function is as follows. Catalyzes the NAD(H)-dependent interconversion of D-fructose 6-phosphate and D-mannitol 1-phosphate in the mannitol metabolic pathway. Required for the process of sporulation on senescing leaf material. This is Mannitol-1-phosphate 5-dehydrogenase (mpd1) from Phaeosphaeria nodorum (strain SN15 / ATCC MYA-4574 / FGSC 10173) (Glume blotch fungus).